The sequence spans 873 residues: Alanine--tRNA ligase (873 aa).

Residues His562, His566, Cys663, and His667 each coordinate Zn(2+).

This sequence belongs to the class-II aminoacyl-tRNA synthetase family. Requires Zn(2+) as cofactor.

Its subcellular location is the cytoplasm. The enzyme catalyses tRNA(Ala) + L-alanine + ATP = L-alanyl-tRNA(Ala) + AMP + diphosphate. Its function is as follows. Catalyzes the attachment of alanine to tRNA(Ala) in a two-step reaction: alanine is first activated by ATP to form Ala-AMP and then transferred to the acceptor end of tRNA(Ala). Also edits incorrectly charged Ser-tRNA(Ala) and Gly-tRNA(Ala) via its editing domain. The polypeptide is Alanine--tRNA ligase (Bordetella avium (strain 197N)).